Reading from the N-terminus, the 482-residue chain is Lipoamide acyltransferase component of branched-chain alpha-keto acid dehydrogenase complex, mitochondrial (482 aa).

Residues 1–61 constitute a mitochondrion transit peptide; the sequence is MAAARVLRTW…HSLRTAAVLQ (61 aa). A Lipoyl-binding domain is found at 64-139; that stretch reads VVQFKLSDIG…YVGKPLIDIE (76 aa). N6-lipoyllysine is present on Lys105. Lys133 carries the N6-succinyllysine modification. Residues 145–160 form a critical for association with PPM1K region; the sequence is DSEEDVVETPAVSHDE. A Peripheral subunit-binding (PSBD) domain is found at 172-209; the sequence is LATPAVRRLAMENNIKLSEVVGSGKDGRILKEDILSFL. An N6-acetyllysine; alternate modification is found at Lys196. An N6-succinyllysine; alternate modification is found at Lys196. Lys202 is modified (N6-acetyllysine). Positions 217–252 are disordered; it reads LPPSPKSEITPPPPQPKDRTFPTPIAKPPVFTGKDR. Residues 218–231 are compositionally biased toward pro residues; sequence PPSPKSEITPPPPQ. Ser220 carries the post-translational modification Phosphoserine. Residues Lys243 and Lys250 each carry the N6-acetyllysine modification. The residue at position 261 (Lys261) is an N6-succinyllysine. Residue Lys289 is modified to N6-acetyllysine; alternate. Lys289 is modified (N6-succinyllysine; alternate). Arg291 contacts CoA. N6-acetyllysine occurs at positions 295 and 304. Residues Ser306, Asp349, Gln378, Ser399, Asn400, Ser403, Gly424, and Ile426 each contribute to the CoA site. Lys435 is modified (N6-acetyllysine). An N6-acetyllysine; alternate modification is found at Lys440. Position 440 is an N6-succinyllysine; alternate (Lys440). Catalysis depends on residues His452 and Asp456.

Belongs to the 2-oxoacid dehydrogenase family. Forms a 24-polypeptide structural core with octahedral symmetry that represents the E2 component of the branched-chain alpha-ketoacid dehydrogenase (BCKDH) complex. The BCKDH complex is composed of three major building blocks E1, E2 and E3. It is organized around E2, a 24-meric cubic core composed of DBT, to which are associated 6 to 12 copies of E1, and approximately 6 copies of the dehydrogenase E3, a DLD dimer. Interacts with PPM1K with a 24:1 stoichiometry; the N-terminal region (residues 49-61) of PPM1K and C-terminal linker of the lipoyl domain of DBT/E2 (residues 145-160) are critical for this interaction whereas the lipoyl prosthetic group is dispensable. This interaction requires colocalization in mitochondria. PPM1K competes with BCKDK for binding to DBT; this interaction is modulated by branched-chain alpha-keto acids (BCKAs). At steady state, BCKDH holoenzyme preferentially binds BCKDK and BCKDHA is phosphorylated. In response to high levels of BCKAs, BCKDK is replaced by PPM1K leading to BCKDHA dephosphorylation. (R)-lipoate serves as cofactor.

It is found in the mitochondrion matrix. It carries out the reaction N(6)-[(R)-dihydrolipoyl]-L-lysyl-[protein] + 2-methylpropanoyl-CoA = N(6)-[(R)-S(8)-2-methylpropanoyldihydrolipoyl]-L-lysyl-[protein] + CoA. The branched-chain alpha-keto dehydrogenase complex catalyzes the overall conversion of alpha-keto acids to acyl-CoA and CO(2). It contains multiple copies of three enzymatic components: branched-chain alpha-keto acid decarboxylase (E1), lipoamide acyltransferase (E2) and lipoamide dehydrogenase (E3). Within this complex, the catalytic function of this enzyme is to accept, and to transfer to coenzyme A, acyl groups that are generated by the branched-chain alpha-keto acid decarboxylase component. This chain is Lipoamide acyltransferase component of branched-chain alpha-keto acid dehydrogenase complex, mitochondrial (Dbt), found in Mus musculus (Mouse).